A 304-amino-acid chain; its full sequence is Aspartate carbamoyltransferase catalytic subunit (304 aa).

Carbamoyl phosphate contacts are provided by Arg-57 and Thr-58. Lys-86 is a binding site for L-aspartate. Carbamoyl phosphate contacts are provided by Arg-107, His-135, and Gln-138. L-aspartate-binding residues include Arg-168 and Arg-229. Residues Leu-266 and Pro-267 each coordinate carbamoyl phosphate.

Belongs to the aspartate/ornithine carbamoyltransferase superfamily. ATCase family. In terms of assembly, heterooligomer of catalytic and regulatory chains.

It catalyses the reaction carbamoyl phosphate + L-aspartate = N-carbamoyl-L-aspartate + phosphate + H(+). Its pathway is pyrimidine metabolism; UMP biosynthesis via de novo pathway; (S)-dihydroorotate from bicarbonate: step 2/3. In terms of biological role, catalyzes the condensation of carbamoyl phosphate and aspartate to form carbamoyl aspartate and inorganic phosphate, the committed step in the de novo pyrimidine nucleotide biosynthesis pathway. This chain is Aspartate carbamoyltransferase catalytic subunit, found in Methanosphaera stadtmanae (strain ATCC 43021 / DSM 3091 / JCM 11832 / MCB-3).